Here is a 256-residue protein sequence, read N- to C-terminus: Hemin import ATP-binding protein HmuV (256 aa).

The 237-residue stretch at 2 to 238 folds into the ABC transporter domain; sequence ISAQNLVYSL…QALTMLYGAD (237 aa). 34 to 41 serves as a coordination point for ATP; that stretch reads GPNGAGKS.

This sequence belongs to the ABC transporter superfamily. Heme (hemin) importer (TC 3.A.1.14.5) family. The complex is composed of two ATP-binding proteins (HmuV), two transmembrane proteins (HmuU) and a solute-binding protein (HmuT).

It is found in the cell inner membrane. Its function is as follows. Part of the ABC transporter complex HmuTUV involved in hemin import. Responsible for energy coupling to the transport system. This chain is Hemin import ATP-binding protein HmuV, found in Shigella dysenteriae serotype 1 (strain Sd197).